Here is a 173-residue protein sequence, read N- to C-terminus: UPF0316 protein Amet_0954 (173 aa).

A run of 3 helical transmembrane segments spans residues 3-23 (LVLG…MGTV), 38-58 (AIGF…LEAL), and 61-81 (PVNI…GIYI).

It belongs to the UPF0316 family.

It localises to the cell membrane. This chain is UPF0316 protein Amet_0954, found in Alkaliphilus metalliredigens (strain QYMF).